Reading from the N-terminus, the 476-residue chain is MGEIAPEMEISQYTKDKASCTRISIESYYSKRVTQCAERENRLKKLEEDISARGLSDEEKEEKRKIHHSKETDYLRLKRTRLTVNDFESLKVIGRGAFGEVRLVQKHDTGHIYAMKILRKSEMVEKEQTAHVRAERDILSEADCDWVVKMYYSFQDYSNLYLVMEFLPGGDMMTLLIKKDTLTEEATQFYIAEAALAIQFIHSLGFIHRDIKPDNLLLDARGHVKLSDFGLCTGLKKFHRTDHYRNWPSTLPPDFISKPFESKRKAETWKRNRRAYAYSTVGTPDYIAPEVFQPNGYTKSCDWWSLGVIMYEMLIGYPPFCSELPQETYRKVINWQQTLVFPSDVPISIEAKATIKRFCCEAERRLGNHGGLDEIKQCPFVKRIDWNHIRERPPPIRVTVKSIDDTSNFDDFPDEDLTWPTSTLIRPEEQPGRRGEFVDFTYKRFDGLTQKMRYSDLKKFQQAKKNKKGGQQGTSD.

The Protein kinase domain maps to 87 to 381 (FESLKVIGRG…LDEIKQCPFV (295 aa)). Residues 93–101 (IGRGAFGEV) and lysine 116 each bind ATP. Residue aspartate 210 is the Proton acceptor of the active site. One can recognise an AGC-kinase C-terminal domain in the interval 382 to 452 (KRIDWNHIRE…KRFDGLTQKM (71 aa)).

This sequence belongs to the protein kinase superfamily. AGC Ser/Thr protein kinase family. Requires Mg(2+) as cofactor. Widely expressed in embryonic and larval neurons that contribute axons to the nerve ring and in hypodermal cells, including lateral seam cells. Also displays a punctate localization in muscle.

It is found in the cytoplasm. It localises to the nucleus. The catalysed reaction is L-seryl-[protein] + ATP = O-phospho-L-seryl-[protein] + ADP + H(+). It catalyses the reaction L-threonyl-[protein] + ATP = O-phospho-L-threonyl-[protein] + ADP + H(+). Functionally, acts with sax-2 to restrict the growth of both primary and secondary neurites. Regulates mechanosensory tiling by controlling the termination point of sensory dendrites. This chain is Serine/threonine-protein kinase sax-1, found in Caenorhabditis elegans.